We begin with the raw amino-acid sequence, 418 residues long: Tyrosine--tRNA ligase (418 aa).

Tyr-35 contacts L-tyrosine. The 'HIGH' region signature appears at 40 to 49; that stretch reads PTAKSLHIGH. Residues Tyr-168 and Gln-172 each coordinate L-tyrosine. The short motif at 228–232 is the 'KMSKS' region element; that stretch reads KYGKT. An ATP-binding site is contributed by Lys-231. Residues 352-410 form the S4 RNA-binding domain; sequence PTVVGAMVAAGVVDTKSGGRRAVAEGGAYLNNVKVADPDQRLTDDDFLCGRVALVRRGK.

The protein belongs to the class-I aminoacyl-tRNA synthetase family. TyrS type 1 subfamily. As to quaternary structure, homodimer.

It is found in the cytoplasm. It carries out the reaction tRNA(Tyr) + L-tyrosine + ATP = L-tyrosyl-tRNA(Tyr) + AMP + diphosphate + H(+). Its function is as follows. Catalyzes the attachment of tyrosine to tRNA(Tyr) in a two-step reaction: tyrosine is first activated by ATP to form Tyr-AMP and then transferred to the acceptor end of tRNA(Tyr). The chain is Tyrosine--tRNA ligase from Cutibacterium acnes (strain DSM 16379 / KPA171202) (Propionibacterium acnes).